A 287-amino-acid chain; its full sequence is UBX domain-containing protein 1 (287 aa).

Residues 1–42 enclose the UBA domain; sequence MAECSTLESLIEMGFSPSRAEKALAATGNQGIEPAMDWLVEH. The interval 44–207 is disordered; it reads DDPDIDEPSV…VQEPPTKKEY (164 aa). 2 stretches are compositionally biased toward basic and acidic residues: residues 72–114 and 129–169; these read CEER…EQEK and KIQE…ERAR. Residues 72–164 adopt a coiled-coil conformation; sequence CEERLPLTEE…RVREKIARDK (93 aa). Positions 176 to 197 are enriched in low complexity; that stretch reads SEPISPPAEASIPATTPSPSSP. One can recognise a UBX domain in the interval 205-284; the sequence is KEYDQCRIQV…GLVPSAVLIV (80 aa).

The protein resides in the cytoplasm. Component of a complex required to couple deglycosylation and proteasome-mediated degradation of misfolded proteins in the endoplasmic reticulum that are retrotranslocated in the cytosol. Involved in ubiquitin-proteasome systems. This is UBX domain-containing protein 1 (ubxn1) from Xenopus tropicalis (Western clawed frog).